The following is a 341-amino-acid chain: Dimethylsulfoniopropionate lyase 7 (341 aa).

2 stretches are compositionally biased toward basic and acidic residues: residues 1–10 (MAGKDRKTIE) and 319–328 (ERKLAKDRQK). Disordered stretches follow at residues 1-24 (MAGK…GGRF) and 319-341 (ERKL…AFDA).

The protein belongs to the aspartate/glutamate racemases family. ALMA1 subfamily. As to quaternary structure, homotetramer.

It carries out the reaction S,S-dimethyl-beta-propiothetin = acrylate + dimethyl sulfide + H(+). Functionally, mediates cleavage of dimethylsulfoniopropionate (DMSP) into dimethyl sulfide (DMS) and acrylate. DMS is the principal form by which sulfur is transported from oceans to the atmosphere and is a key component of the ocean sulfur cycle. In Emiliania huxleyi (strain CCMP1516), this protein is Dimethylsulfoniopropionate lyase 7.